The primary structure comprises 387 residues: EARP-interacting protein homolog (387 aa).

4 WD repeats span residues 132–172 (TAHG…TKSV), 182–222 (KGQL…QIYC), 226–266 (AHGQ…EPVK), and 270–310 (EHSH…SEPF). The tract at residues 311-339 (GHLVDDEDLSDQEDNPQEEKTKEPLQDSI) is disordered. The span at 315–326 (DDEDLSDQEDNP) shows a compositional bias: acidic residues. One copy of the WD 5 repeat lies at 345 to 385 (EHEDSVYAVEWSSADPWLFASLSYDGRLVINRVPRALKYNI).

Belongs to the WD repeat EIPR1 family.

The protein resides in the golgi apparatus. Its subcellular location is the trans-Golgi network. In terms of biological role, may act as a component of endosomal retrieval machinery that is involved in protein transport from early endosomes to either recycling endosomes or the trans-Golgi network. This chain is EARP-interacting protein homolog, found in Xenopus laevis (African clawed frog).